A 393-amino-acid chain; its full sequence is NADH-quinone oxidoreductase subunit H 2 (393 aa).

10 helical membrane passes run 13–33 (VLVT…IVLV), 79–99 (AIFW…FAVI), 112–132 (VGLL…ILGG), 158–178 (LAFA…QGIV), 186–206 (VWGI…YIIA), 240–260 (LYFL…VTLF), 278–298 (LNYG…FTLI), 309–329 (VLLG…IPMV), 333–353 (MIGL…MIWF), and 368–388 (IGWK…AVLG).

It belongs to the complex I subunit 1 family. In terms of assembly, NDH-1 is composed of 14 different subunits. Subunits NuoA, H, J, K, L, M, N constitute the membrane sector of the complex.

Its subcellular location is the cell inner membrane. It carries out the reaction a quinone + NADH + 5 H(+)(in) = a quinol + NAD(+) + 4 H(+)(out). In terms of biological role, NDH-1 shuttles electrons from NADH, via FMN and iron-sulfur (Fe-S) centers, to quinones in the respiratory chain. The immediate electron acceptor for the enzyme in this species is believed to be ubiquinone. Couples the redox reaction to proton translocation (for every two electrons transferred, four hydrogen ions are translocated across the cytoplasmic membrane), and thus conserves the redox energy in a proton gradient. This subunit may bind ubiquinone. The chain is NADH-quinone oxidoreductase subunit H 2 from Solibacter usitatus (strain Ellin6076).